Consider the following 286-residue polypeptide: Deleted in azoospermia-like-A (286 aa).

The 82-residue stretch at Asn-33–Val-114 folds into the RRM domain. Residues Ala-155–Gln-180 enclose the DAZ domain.

The protein belongs to the RRM DAZ family. As to quaternary structure, interacts with the C-terminus of pabp1 and with epabp. Prior to oocyte maturation, found in a complex with epabp and pum2 proteins and spdy1 mRNA; pum2 dissociates from the complex during maturation. As to expression, germ-line specific. Oocyte mRNA expression is first restricted to the granulo-fibrillar material (GFM) of the mitochondrial cloud and then to the oocyte germ plasm at the vegetal cortex. Remains an mRNA component of the germ plasm until the neurula stage. In 2-8 cell embryos, expressed in the germ plasm matrix between germinal granules and mitochondria. Expressed in primordial germ cells (PGCs) later in embryogenesis. In addition to the ovaries of adult females, expressed in the testis of adult and juvenile males in spermatogonia and spermatocytes. The protein is restricted to the embryonic germ plasm and primordial germ cells.

Its subcellular location is the cytoplasm. RNA-binding protein that is required for primordial germ cell (PGC) differentiation and indirectly necessary for the migration of PGCs through the endoderm. May promote meiotic cell division during spermatogenesis. Shows a preference for G- and U-rich RNAs and probably binds the 3'-UTR of target mRNAs. Stimulates the initiation of translation of mRNAs through the recruitment of poly(A)-binding proteins (PABPs). The polypeptide is Deleted in azoospermia-like-A (dazl-a) (Xenopus laevis (African clawed frog)).